The primary structure comprises 483 residues: Glycogen synthase (483 aa).

Position 15 (K15) interacts with ADP-alpha-D-glucose.

The protein belongs to the glycosyltransferase 1 family. Bacterial/plant glycogen synthase subfamily.

The enzyme catalyses [(1-&gt;4)-alpha-D-glucosyl](n) + ADP-alpha-D-glucose = [(1-&gt;4)-alpha-D-glucosyl](n+1) + ADP + H(+). Its pathway is glycan biosynthesis; glycogen biosynthesis. Synthesizes alpha-1,4-glucan chains using ADP-glucose. The chain is Glycogen synthase from Alkalilimnicola ehrlichii (strain ATCC BAA-1101 / DSM 17681 / MLHE-1).